Reading from the N-terminus, the 229-residue chain is E3 ubiquitin-protein ligase RNF114 (229 aa).

Residues 1–23 (MAAAQPESRDGAAQSAKPASETD) are disordered. The RING-type zinc finger occupies 30 to 69 (CPVCLEVFEKPVQVPCGHVFCSACLQECLKPKKPVCGVCR). Zn(2+)-binding residues include Cys92 and Cys95. The C2HC RNF-type zinc-finger motif lies at 92–111 (CHGCRKNFILSKIRAHVTSC). Lys103 bears the N6-acetyllysine mark. Zn(2+) is bound by residues His107 and Cys111. Lys113 carries the post-translational modification N6-acetyllysine.

In terms of assembly, interacts with XAF1, the interaction increases XAF1 stability and proapoptotic effects, and may regulate IFN signaling. In terms of processing, autoubiquitinated. Polyubiquitinated in the presence of E2 enzymes UBE2D1, UBE2D2 and UBE2D3, but only monoubiquitinated in the presence of UBE2E1.

It localises to the cytoplasm. It is found in the nucleus. The catalysed reaction is S-ubiquitinyl-[E2 ubiquitin-conjugating enzyme]-L-cysteine + [acceptor protein]-L-lysine = [E2 ubiquitin-conjugating enzyme]-L-cysteine + N(6)-ubiquitinyl-[acceptor protein]-L-lysine.. It participates in protein modification; protein ubiquitination. In terms of biological role, E3 ubiquitin-protein ligase that promotes the ubiquitination of various substrates. In turn, participates in the regulation of many biological processes including cell cycle, apoptosis, osteoclastogenesis as well as innate or adaptive immunity. Acts as negative regulator of NF-kappa-B-dependent transcription by promoting the ubiquitination and stabilization of the NF-kappa-B inhibitor TNFAIP3. May promote the ubiquitination of TRAF6 as well. Also acts as a negative regulator of T-cell activation. Inhibits cellular dsRNA responses and interferon production by targeting MAVS component for proteasomal degradation. Ubiquitinates the CDK inhibitor CDKN1A leading to its degradationand probably also CDKN1B and CDKN1C. This activity stimulates cell cycle G1-to-S phase transition and suppresses cellular senescence. May play a role in spermatogenesis. This Mus musculus (Mouse) protein is E3 ubiquitin-protein ligase RNF114 (Rnf114).